The chain runs to 223 residues: Ras-related protein Rab-32 (223 aa).

Residue Ala2 is modified to N-acetylalanine. GTP is bound by residues Val34, Gly35, Lys36, Thr37, Ser38, Ser49, Gln50, Tyr52, and Thr55. Position 37 (Thr37) interacts with Mg(2+). The Switch 1 signature appears at 46 to 60 (QLFSQHYRATIGVDF). Thr55 is a binding site for Mg(2+). A Phosphoserine modification is found at Ser69. Asp79 serves as a coordination point for Mg(2+). Gly82, Asn141, Lys142, Asp144, Ala173, and Lys174 together coordinate GTP. The Switch 2 motif lies at 82–95 (GQERFGNMTRVYYK). A PKA-RII subunit binding domain region spans residues 176-195 (NINIDEATRFLVENMLANQQ). 2 S-geranylgeranyl cysteine lipidation sites follow: Cys222 and Cys223.

Belongs to the small GTPase superfamily. Rab family. In terms of assembly, interacts with ANKRD27. A decreased interaction with ANKRD27 seen in the presence of SGSM2. Interacts with LRRK2 (via N-terminus); this interaction results in stimulation of RAB10 phosphorylation by LRRK2. It depends on Mg(2+) as a cofactor. As to expression, widely expressed with highest levels in liver. Strong expression also found in melanocyte, platelet, mast cell and fibroblast cell lines.

Its subcellular location is the mitochondrion. The protein resides in the mitochondrion outer membrane. It is found in the cytoplasmic vesicle. The protein localises to the phagosome. It localises to the phagosome membrane. Its subcellular location is the melanosome. The protein resides in the melanosome membrane. It carries out the reaction GTP + H2O = GDP + phosphate + H(+). With respect to regulation, regulated by guanine the nucleotide exchange factor (GEF) BLOC-3 complex composed of HPS1 and HPS4 which promote the exchange of bound GDP for free GTP. Regulated by the GTPase activating protein (GAP) SGSM2/RUTBC1 which increases the GTP hydrolysis activity. Inhibited by GDP dissociation inhibitors (GDIs) which prevent Rab-GDP dissociation. Functionally, the small GTPases Rab are key regulators of intracellular membrane trafficking, from the formation of transport vesicles to their fusion with membranes. Rabs cycle between an inactive GDP-bound form and an active GTP-bound form that is able to recruit to membranes different set of downstream effectors directly responsible for vesicle formation, movement, tethering and fusion. Also acts as an A-kinase anchoring protein by binding to the type II regulatory subunit of protein kinase A and anchoring it to the mitochondrion. Also involved in synchronization of mitochondrial fission. Plays a role in the maturation of phagosomes that engulf pathogens, such as S.aureus and M.tuberculosis. Plays an important role in the control of melanin production and melanosome biogenesis. In concert with RAB38, regulates the proper trafficking of melanogenic enzymes TYR, TYRP1 and DCT/TYRP2 to melanosomes in melanocytes. Stimulates phosphorylation of RAB10 'Thr-73' by LRRK2. The sequence is that of Ras-related protein Rab-32 from Mus musculus (Mouse).